Consider the following 211-residue polypeptide: Ubiquitin-conjugating enzyme E2 S-B (211 aa).

The 147-residue stretch at 11 to 157 (HIIRRVYKEV…ARLMTDIHAQ (147 aa)) folds into the UBC core domain. Cys95 acts as the Glycyl thioester intermediate in catalysis. Residues 158-211 (GTSLRGKDPTDPCSSASTPVVSGDGPMAKKHAGDRDKKLAAKKKTDKKRALRRL) form a disordered region. The segment covering 197-211 (AAKKKTDKKRALRRL) has biased composition (basic residues).

Belongs to the ubiquitin-conjugating enzyme family.

The enzyme catalyses S-ubiquitinyl-[E1 ubiquitin-activating enzyme]-L-cysteine + [E2 ubiquitin-conjugating enzyme]-L-cysteine = [E1 ubiquitin-activating enzyme]-L-cysteine + S-ubiquitinyl-[E2 ubiquitin-conjugating enzyme]-L-cysteine.. It participates in protein modification; protein ubiquitination. Functionally, catalyzes the covalent attachment of ubiquitin to other proteins. Acts as an essential factor of the anaphase promoting complex/cyclosome (APC/C), a cell cycle-regulated ubiquitin ligase that controls progression through mitosis. Acts by specifically elongating 'Lys-11'-linked polyubiquitin chains initiated by the E2 enzyme ube2c/ubch10 on APC/C substrates, enhancing the degradation of APC/C substrates by the proteasome and promoting mitotic exit. The polypeptide is Ubiquitin-conjugating enzyme E2 S-B (ube2s-b) (Xenopus laevis (African clawed frog)).